The chain runs to 91 residues: MANTKSAEKRHRQSLKRRARNVTVRGEVKTAVKSAREALGSKDGAKMTDAIKSAAKALSKAATKGVLHKRTASRRISRLAKAATKAARAQA.

Positions 1–25 (MANTKSAEKRHRQSLKRRARNVTVR) are disordered. Over residues 8–20 (EKRHRQSLKRRAR) the composition is skewed to basic residues.

This sequence belongs to the bacterial ribosomal protein bS20 family.

Its function is as follows. Binds directly to 16S ribosomal RNA. This chain is Small ribosomal subunit protein bS20, found in Myxococcus xanthus (strain DK1622).